The following is a 648-amino-acid chain: Replication restart protein PriA (648 aa).

A Helicase ATP-binding domain is found at Thr131 to Leu297. Residue Gly144 to Thr151 participates in ATP binding. The DEAH box signature appears at Asp240–His243. The Zn(2+) site is built by Cys358, Cys361, Cys367, Cys370, Cys385, Cys388, Cys398, and Cys401. Residues Val375 to Arg548 form the Helicase C-terminal domain.

This sequence belongs to the helicase family. PriA subfamily. Component of the replication restart primosome. Zn(2+) is required as a cofactor.

It catalyses the reaction Couples ATP hydrolysis with the unwinding of duplex DNA by translocating in the 3'-5' direction.. The catalysed reaction is ATP + H2O = ADP + phosphate + H(+). In terms of biological role, initiates the restart of stalled replication forks, which reloads the replicative helicase on sites other than the origin of replication. Recognizes and binds to abandoned replication forks and remodels them to uncover a helicase loading site. Promotes assembly of the primosome at these replication forks. This Rickettsia prowazekii (strain Madrid E) protein is Replication restart protein PriA.